We begin with the raw amino-acid sequence, 152 residues long: UPF0225 protein YchJ (152 aa).

It belongs to the UPF0225 family.

The chain is UPF0225 protein YchJ from Salmonella gallinarum (strain 287/91 / NCTC 13346).